The chain runs to 228 residues: NAD(P)H-hydrate epimerase (228 aa).

In terms of domain architecture, YjeF N-terminal spans 9-209 (VRAVERLAHR…LLGLTPAFLA (201 aa)). 53-57 (NNGGD) contacts (6S)-NADPHX. Residues N54 and D115 each coordinate K(+). (6S)-NADPHX contacts are provided by residues 119-125 (GIGLARP) and D148. K(+) is bound at residue S151.

The protein belongs to the NnrE/AIBP family. Requires K(+) as cofactor.

The enzyme catalyses (6R)-NADHX = (6S)-NADHX. It catalyses the reaction (6R)-NADPHX = (6S)-NADPHX. Functionally, catalyzes the epimerization of the S- and R-forms of NAD(P)HX, a damaged form of NAD(P)H that is a result of enzymatic or heat-dependent hydration. This is a prerequisite for the S-specific NAD(P)H-hydrate dehydratase to allow the repair of both epimers of NAD(P)HX. In Bordetella bronchiseptica (strain ATCC BAA-588 / NCTC 13252 / RB50) (Alcaligenes bronchisepticus), this protein is NAD(P)H-hydrate epimerase.